The chain runs to 394 residues: RNA binding protein fox-1 homolog 2 (394 aa).

2 disordered regions span residues 1–70 and 83–135; these read MGRL…DYAG and TQAH…HVSN. Composition is skewed to polar residues over residues 24 to 36 and 83 to 103; these read RDSQ…TTTP and TQAH…SLTT. The segment covering 105–125 has biased composition (low complexity); that stretch reads GGAQTDGQQSQTQSSENSESK. Positions 129–205 constitute an RRM domain; the sequence is KRLHVSNIPF…RKIEVNNATA (77 aa). Residue arginine 285 is modified to Omega-N-methylarginine. Residues arginine 301 and arginine 333 each carry the asymmetric dimethylarginine modification. Residues arginine 385 and arginine 390 each carry the asymmetric dimethylarginine; alternate modification. Arginine 385 and arginine 390 each carry omega-N-methylarginine; alternate.

Interacts with ER-alpha N-terminal activation domain. Interacts with RBPMS; the interaction allows cooperative assembly of stable cell-specific alternative splicing regulatory complexes.

It localises to the nucleus. The protein localises to the cytoplasm. Its function is as follows. RNA-binding protein that regulates alternative splicing events by binding to 5'-UGCAUGU-3' elements. Prevents binding of U2AF2 to the 3'-splice site. Regulates alternative splicing of tissue-specific exons and of differentially spliced exons during erythropoiesis. Seems to act as a coregulatory factor of ER-alpha. Together with RNA binding proteins RBPMS and MBNL1/2, activates vascular smooth muscle cells alternative splicing events. In Bos taurus (Bovine), this protein is RNA binding protein fox-1 homolog 2 (RBFOX2).